The chain runs to 122 residues: Small ribosomal subunit protein uS13 (122 aa).

Residues 95 to 122 (GLPVHGQRTKTNARTRKGPARTVAGKKK) form a disordered region.

The protein belongs to the universal ribosomal protein uS13 family. In terms of assembly, part of the 30S ribosomal subunit. Forms a loose heterodimer with protein S19. Forms two bridges to the 50S subunit in the 70S ribosome.

Functionally, located at the top of the head of the 30S subunit, it contacts several helices of the 16S rRNA. In the 70S ribosome it contacts the 23S rRNA (bridge B1a) and protein L5 of the 50S subunit (bridge B1b), connecting the 2 subunits; these bridges are implicated in subunit movement. Contacts the tRNAs in the A and P-sites. In Geotalea uraniireducens (strain Rf4) (Geobacter uraniireducens), this protein is Small ribosomal subunit protein uS13.